The sequence spans 250 residues: Bacteriorhodopsin (250 aa).

Over 1 to 18 (MCCAALAPPMAATVGPES) the chain is Extracellular. A helical transmembrane segment spans residues 19–37 (IWLWIGTIGMTLGTLYFVG). At 38–51 (RGRGVRDRKMQEFY) the chain is on the cytoplasmic side. Residues 52-70 (IITIFITTIAAAMYFAMAT) form a helical membrane-spanning segment. At 71 to 86 (GFGVTEVMVGDEALTI) the chain is on the extracellular side. Residues 87–104 (YWARYADWLFTTPLLLLD) form a helical membrane-spanning segment. The Cytoplasmic segment spans residues 105 to 115 (LSLLAGANRNT). The helical transmembrane segment at 116–135 (IATLIGLDVFMIGTGAIAAL) threads the bilayer. The Extracellular segment spans residues 136-142 (SSTPGTR). The helical transmembrane segment at 143–162 (IAWWAISTGALLALLYVLVG) threads the bilayer. At 163–180 (TLSENARNRAPEVASLFG) the chain is on the cytoplasmic side. The helical transmembrane segment at 181–199 (RLRNLVIALWFLYPVVWIL) threads the bilayer. Topologically, residues 200-212 (GTEGTFGILPLYW) are extracellular. A helical membrane pass occupies residues 213 to 232 (ETAAFMVLDLSAKVGFGVIL). Lys-225 is subject to N6-(retinylidene)lysine. Residues 233–250 (LQSRSVLERVATPTAAPT) are Cytoplasmic-facing.

The protein belongs to the archaeal/bacterial/fungal opsin family.

The protein localises to the cell membrane. In terms of biological role, light-driven proton pump. This Haloterrigena sp. (strain arg-4) protein is Bacteriorhodopsin (bop).